The sequence spans 682 residues: E3 ubiquitin ligase Rnf157 (682 aa).

Glycine 2 carries N-myristoyl glycine lipidation. Residues 277–317 (CVVCLSDVRDTLILPCRHCASCNVHCADTLRYQANNCPICR) form an RING-type; degenerate zinc finger. Positions 330 to 333 (RKKL) match the D-box 1 motif. 2 disordered regions span residues 440 to 604 (QNSS…VQED) and 655 to 682 (NTQR…PLAV). Positions 479–538 (ESENLTLSSSGAVDQSSCTGTPLSSTISSPEDPASSSLAQSVMSMASSQISTDTVSSMSG) are enriched in polar residues. Over residues 585–597 (QDAEGNDIMEEED) the composition is skewed to acidic residues. Positions 658 to 661 (RRRL) match the D-box 2 motif. 3 positions are modified to phosphoserine: serine 662, serine 664, and serine 665.

In terms of assembly, interacts with APBB1. Interacts with CHD1; CHD1-binding controls RNF157 stability. Also interacts with ATRN, MEGF8, TECR, MSI2, PLRG1, BYSL, MTERF3, PSMA1, MRPS18B, PRPF4, FASTKD2, SLC25A1, SMU1, CNOT9, MRPS2, MAGT1, FXR2, EMD, PSMD8, HDAC1, RAN, HSD17B12, TXNDC5 and MRPL19. As to expression, predominantly expressed in the brain.

The protein resides in the cytoplasm. The catalysed reaction is S-ubiquitinyl-[E2 ubiquitin-conjugating enzyme]-L-cysteine + [acceptor protein]-L-lysine = [E2 ubiquitin-conjugating enzyme]-L-cysteine + N(6)-ubiquitinyl-[acceptor protein]-L-lysine.. Functionally, E3 ubiquitin ligase that ubiquitinates APBB1 for its degradation by the proteasome and thus prevents apoptosis and promotes survival of neurons. Has a dual role in neurons as it is also required for dendrite growth and maintenance for which its ligase activity is not critical. May act as a scaffold molecule to regulate this process. Acts as a downstream effector of the interconnected PI3K and MAPK signaling pathways and thus participates in the regulation of the cell cycle. The polypeptide is E3 ubiquitin ligase Rnf157 (Rnf157) (Rattus norvegicus (Rat)).